A 427-amino-acid polypeptide reads, in one-letter code: Gamma-glutamyl phosphate reductase (427 aa).

Belongs to the gamma-glutamyl phosphate reductase family.

It localises to the cytoplasm. It carries out the reaction L-glutamate 5-semialdehyde + phosphate + NADP(+) = L-glutamyl 5-phosphate + NADPH + H(+). It functions in the pathway amino-acid biosynthesis; L-proline biosynthesis; L-glutamate 5-semialdehyde from L-glutamate: step 2/2. Its function is as follows. Catalyzes the NADPH-dependent reduction of L-glutamate 5-phosphate into L-glutamate 5-semialdehyde and phosphate. The product spontaneously undergoes cyclization to form 1-pyrroline-5-carboxylate. This Rhizobium etli (strain ATCC 51251 / DSM 11541 / JCM 21823 / NBRC 15573 / CFN 42) protein is Gamma-glutamyl phosphate reductase.